Here is a 392-residue protein sequence, read N- to C-terminus: Succinate--CoA ligase [ADP-forming] subunit beta (392 aa).

Residues 9–248 (KGILKQFGVA…ITEEDPLEYE (240 aa)) form the ATP-grasp domain. Residues K50, 57-59 (GRG), E103, M106, and E111 each bind ATP. Positions 203 and 217 each coordinate Mg(2+). Residues N268 and 325 to 327 (GIV) each bind substrate.

It belongs to the succinate/malate CoA ligase beta subunit family. Heterotetramer of two alpha and two beta subunits. It depends on Mg(2+) as a cofactor.

It carries out the reaction succinate + ATP + CoA = succinyl-CoA + ADP + phosphate. The enzyme catalyses GTP + succinate + CoA = succinyl-CoA + GDP + phosphate. It functions in the pathway carbohydrate metabolism; tricarboxylic acid cycle; succinate from succinyl-CoA (ligase route): step 1/1. Succinyl-CoA synthetase functions in the citric acid cycle (TCA), coupling the hydrolysis of succinyl-CoA to the synthesis of either ATP or GTP and thus represents the only step of substrate-level phosphorylation in the TCA. The beta subunit provides nucleotide specificity of the enzyme and binds the substrate succinate, while the binding sites for coenzyme A and phosphate are found in the alpha subunit. In Chlorobaculum parvum (strain DSM 263 / NCIMB 8327) (Chlorobium vibrioforme subsp. thiosulfatophilum), this protein is Succinate--CoA ligase [ADP-forming] subunit beta.